The following is a 313-amino-acid chain: Porphobilinogen deaminase (313 aa).

Cys-242 is modified (S-(dipyrrolylmethanemethyl)cysteine).

The protein belongs to the HMBS family. In terms of assembly, monomer. Requires dipyrromethane as cofactor.

It catalyses the reaction 4 porphobilinogen + H2O = hydroxymethylbilane + 4 NH4(+). It functions in the pathway porphyrin-containing compound metabolism; protoporphyrin-IX biosynthesis; coproporphyrinogen-III from 5-aminolevulinate: step 2/4. Functionally, tetrapolymerization of the monopyrrole PBG into the hydroxymethylbilane pre-uroporphyrinogen in several discrete steps. The polypeptide is Porphobilinogen deaminase (Escherichia fergusonii (strain ATCC 35469 / DSM 13698 / CCUG 18766 / IAM 14443 / JCM 21226 / LMG 7866 / NBRC 102419 / NCTC 12128 / CDC 0568-73)).